Consider the following 188-residue polypeptide: Elongation factor P (188 aa).

The residue at position 34 (Lys-34) is an N6-(3,6-diaminohexanoyl)-5-hydroxylysine.

Belongs to the elongation factor P family. Post-translationally, may be beta-lysylated on the epsilon-amino group of Lys-34 by the combined action of EpmA and EpmB, and then hydroxylated on the C5 position of the same residue by EpmC (if this protein is present). Lysylation is critical for the stimulatory effect of EF-P on peptide-bond formation. The lysylation moiety may extend toward the peptidyltransferase center and stabilize the terminal 3-CCA end of the tRNA. Hydroxylation of the C5 position on Lys-34 may allow additional potential stabilizing hydrogen-bond interactions with the P-tRNA.

The protein resides in the cytoplasm. It participates in protein biosynthesis; polypeptide chain elongation. Involved in peptide bond synthesis. Alleviates ribosome stalling that occurs when 3 or more consecutive Pro residues or the sequence PPG is present in a protein, possibly by augmenting the peptidyl transferase activity of the ribosome. Modification of Lys-34 is required for alleviation. The polypeptide is Elongation factor P (Actinobacillus succinogenes (strain ATCC 55618 / DSM 22257 / CCUG 43843 / 130Z)).